A 373-amino-acid polypeptide reads, in one-letter code: Sodium-dependent organic anion transporter (373 aa).

A compositionally biased stretch (polar residues) spans 1 to 15; the sequence is MSTDCAGNSTCPVNS. The interval 1–21 is disordered; the sequence is MSTDCAGNSTCPVNSTEEDPP. The Extracellular segment spans residues 1–32; sequence MSTDCAGNSTCPVNSTEEDPPVGMEGHANLKL. Residues Asn-8 and Asn-14 are each glycosylated (N-linked (GlcNAc...) asparagine). Residues 33 to 53 traverse the membrane as a helical segment; it reads LFTVLSAVMVGLVMFSFGCSV. Topologically, residues 54-67 are cytoplasmic; sequence ESQKLWLHLRRPWG. A helical transmembrane segment spans residues 68-88; sequence IAVGLLSQFGLMPLTAYLLAI. Residues 89–97 are Extracellular-facing; it reads GFGLKPFQA. Residues 98 to 118 traverse the membrane as a helical segment; the sequence is IAVLMMGSCPGGTISNVLTFW. At 119 to 126 the chain is on the cytoplasmic side; that stretch reads VDGDMDLS. The helical transmembrane segment at 127–147 threads the bilayer; the sequence is ISMTTCSTVAALGMMPLCLYI. Residues 148-157 are Extracellular-facing; it reads YTRSWTLTQN. Residues 158–178 traverse the membrane as a helical segment; that stretch reads LVIPYQSIGITLVSLVVPVAS. The Cytoplasmic segment spans residues 179-195; it reads GVYVNYRWPKQATVILK. A helical membrane pass occupies residues 196–216; that stretch reads VGAILGGMLLLVVAVTGMVLA. At 217–224 the chain is on the extracellular side; that stretch reads KGWNTDVT. The helical transmembrane segment at 225 to 245 threads the bilayer; that stretch reads LLVISCIFPLVGHVTGFLLAF. Topologically, residues 246–265 are cytoplasmic; that stretch reads LTHQSWQRCRTISIETGAQN. A helical membrane pass occupies residues 266–283; the sequence is IQLCIAMLQLSFSAEYLV. Gln-284 is a topological domain (extracellular). Residues 285 to 305 form a helical membrane-spanning segment; sequence LLNFALAYGLFQVLHGLLIVA. Residues 306–373 lie on the Cytoplasmic side of the membrane; the sequence is AYQAYKRRQK…ELTSHIPSCE (68 aa).

This sequence belongs to the bile acid:sodium symporter (BASS) (TC 2.A.28) family. Glycosylated. Highest expression in lung and testis, moderate expression in heart, bladder and skin, and low expression in blood, liver, stomach, small intestine, spleen, kidney, adrenal gland, seminal vesicle, preputial gland, coagulating gland, lacrimal gland/eye, and brain.

The protein resides in the membrane. It carries out the reaction estrone 3-sulfate(out) + 2 Na(+)(out) = estrone 3-sulfate(in) + 2 Na(+)(in). The enzyme catalyses 17beta-estradiol 3-sulfate(out) + 2 Na(+)(out) = 17beta-estradiol 3-sulfate(in) + 2 Na(+)(in). It catalyses the reaction dehydroepiandrosterone 3-sulfate(out) + 2 Na(+)(out) = dehydroepiandrosterone 3-sulfate(in) + 2 Na(+)(in). The catalysed reaction is androst-5-ene-diol 3-sulfate(out) + 2 Na(+)(out) = androst-5-ene-diol 3-sulfate(in) + 2 Na(+)(in). It carries out the reaction pregnenolone sulfate(out) + 2 Na(+)(out) = pregnenolone sulfate(in) + 2 Na(+)(in). The enzyme catalyses taurolithocholate 3-sulfate(out) + 2 Na(+)(out) = taurolithocholate 3-sulfate(in) + 2 Na(+)(in). It catalyses the reaction androsterone 3alpha-sulfate(out) + 2 Na(+)(out) = androsterone 3alpha-sulfate(in) + 2 Na(+)(in). The catalysed reaction is 5alpha-dihydrotestosterone sulfate(out) + 2 Na(+)(out) = 5alpha-dihydrotestosterone sulfate(in) + 2 Na(+)(in). It carries out the reaction 17beta-estradiol 17-sulfate(out) + 2 Na(+)(out) = 17beta-estradiol 17-sulfate(in) + 2 Na(+)(in). The enzyme catalyses 17alpha-hydroxypregnenolone 3-sulfate(out) + 2 Na(+)(out) = 17alpha-hydroxypregnenolone 3-sulfate(in) + 2 Na(+)(in). It catalyses the reaction epiandrosterone 3-sulfate(out) + 2 Na(+)(out) = epiandrosterone 3-sulfate(in) + 2 Na(+)(in). The catalysed reaction is epitestosterone 17-sulfate(out) + 2 Na(+)(out) = epitestosterone 17-sulfate(in) + 2 Na(+)(in). It carries out the reaction testosterone 17-sulfate(out) + 2 Na(+)(out) = testosterone 17-sulfate(in) + 2 Na(+)(in). The enzyme catalyses 16alpha-hydroxydehydroepiandrosterone 3-sulfate(out) + 2 Na(+)(out) = 16alpha-hydroxydehydroepiandrosterone 3-sulfate(in) + 2 Na(+)(in). Its function is as follows. Transports sulfoconjugated steroid hormones from the extracellular compartment into the cytosol in a sodium-dependent manner without hydrolysis. Steroid sulfate hormones are commonly considered to be biologically inactive metabolites, that may be activated by steroid sulfatases into free steroids. May play an important role by delivering sulfoconjugated steroids to specific target cells in reproductive organs. May play a role transporting the estriol precursor 16alpha-hydroxydehydroepiandrosterone 3-sulfate (16a-OH-DHEAS) at the fetal blood vessel endothelium. Can also transport other sulfoconjugated molecules such as taurolithocholic acid-3-sulfate and sulfoconjugated pyrenes. The polypeptide is Sodium-dependent organic anion transporter (Slc10a6) (Mus musculus (Mouse)).